Here is a 349-residue protein sequence, read N- to C-terminus: Divinyl chlorophyll a/b light-harvesting protein PcbB (349 aa).

Helical transmembrane passes span 27-47 (FIAA…AATL), 57-77 (LPMG…GIGF), 91-113 (IAIL…SVYF), 201-221 (VMGG…FHIA), 241-261 (AILS…AFWA), and 306-326 (LVNV…WHAL).

It belongs to the PsbB/PsbC family. IsiA/Pcb subfamily. As to quaternary structure, the antenna complex consists of divinyl chlorophylls (a and b) and divinyl chlorophyll a/b binding proteins and binds more divinyl chlorophyll b than does the antenna complex from high-light-adapted Prochlorococcus. Divinyl chlorophyll a is required as a cofactor. Divinyl chlorophyll b serves as cofactor.

Its subcellular location is the cellular thylakoid membrane. The antenna complex functions as a light receptor, it captures and delivers excitation energy to photosystems II and I. The Prochlorales pcb genes are not related to higher plant LHCs. This is Divinyl chlorophyll a/b light-harvesting protein PcbB (pcbB) from Prochlorococcus marinus (strain SARG / CCMP1375 / SS120).